Here is a 264-residue protein sequence, read N- to C-terminus: MKQYLDLMKKVLEEGTPKADRTGTGTLSIFGHQMRFNLQDGFPLVTTKRCHLRSIIHELLWFLNGDTNIAYLKENNVSIWDEWADENGDLGPIYGKQWRAWGAADGRKIDQLSNVVNQLKQDPDSRRIIVSAWNVGELDQMALAPCHAFFQFYVADGKLSCQLYQRSCDVFLGLPFNIASYALLVHMMAQQCDLAVGDFVWTGGDTHLYSNHIDQAHLQLSREPRVLPKLVIKRKPDSLFDYHFDDFDIEGYDPHPGIKAPIAI.

DUMP is bound at residue arginine 21. (6R)-5,10-methylene-5,6,7,8-tetrahydrofolate is bound at residue histidine 51. Position 126–127 (126–127 (RR)) interacts with dUMP. Cysteine 146 acts as the Nucleophile in catalysis. DUMP-binding positions include 166–169 (RSCD), asparagine 177, and 207–209 (HLY). Aspartate 169 lines the (6R)-5,10-methylene-5,6,7,8-tetrahydrofolate pocket. Residue alanine 263 participates in (6R)-5,10-methylene-5,6,7,8-tetrahydrofolate binding.

Belongs to the thymidylate synthase family. Bacterial-type ThyA subfamily. As to quaternary structure, homodimer.

The protein localises to the cytoplasm. The enzyme catalyses dUMP + (6R)-5,10-methylene-5,6,7,8-tetrahydrofolate = 7,8-dihydrofolate + dTMP. Its pathway is pyrimidine metabolism; dTTP biosynthesis. Its function is as follows. Catalyzes the reductive methylation of 2'-deoxyuridine-5'-monophosphate (dUMP) to 2'-deoxythymidine-5'-monophosphate (dTMP) while utilizing 5,10-methylenetetrahydrofolate (mTHF) as the methyl donor and reductant in the reaction, yielding dihydrofolate (DHF) as a by-product. This enzymatic reaction provides an intracellular de novo source of dTMP, an essential precursor for DNA biosynthesis. This is Thymidylate synthase from Yersinia pestis bv. Antiqua (strain Antiqua).